A 123-amino-acid polypeptide reads, in one-letter code: Small ribosomal subunit protein uS13c (123 aa).

Positions 90 to 123 (GKRHRNNLPVRGQRTRTNARSRRGSKKTVTGKKK) are disordered. Basic residues predominate over residues 102–123 (QRTRTNARSRRGSKKTVTGKKK).

It belongs to the universal ribosomal protein uS13 family. As to quaternary structure, part of the 30S ribosomal subunit.

Its subcellular location is the plastid. The protein localises to the chloroplast. Its function is as follows. Located at the top of the head of the 30S subunit, it contacts several helices of the 16S rRNA. The polypeptide is Small ribosomal subunit protein uS13c (Trieres chinensis (Marine centric diatom)).